A 233-amino-acid chain; its full sequence is 7-cyano-7-deazaguanine synthase (233 aa).

8–18 contacts ATP; it reads LSGGLDSTTCM. Zn(2+) is bound by residues Cys186, Cys194, Cys197, and Cys200.

Belongs to the QueC family. In terms of assembly, homodimer. Zn(2+) is required as a cofactor.

The enzyme catalyses 7-carboxy-7-deazaguanine + NH4(+) + ATP = 7-cyano-7-deazaguanine + ADP + phosphate + H2O + H(+). It participates in purine metabolism; 7-cyano-7-deazaguanine biosynthesis. Functionally, catalyzes the ATP-dependent conversion of 7-carboxy-7-deazaguanine (CDG) to 7-cyano-7-deazaguanine (preQ(0)). This is 7-cyano-7-deazaguanine synthase from Desulfitobacterium hafniense (strain DSM 10664 / DCB-2).